The following is a 586-amino-acid chain: Glutamate--tRNA ligase (586 aa).

The 'HIGH' region motif lies at 114 to 124 (PNPNGPWHVGH). Basic and acidic residues-rich tracts occupy residues 431-443 (ARGEGPEESHEAV) and 459-468 (HPEHPDRGDR). The segment at 431 to 468 (ARGEGPEESHEAVEVPVDDGPDEATPQVHPEHPDRGDR) is disordered.

The protein belongs to the class-I aminoacyl-tRNA synthetase family. Glutamate--tRNA ligase type 2 subfamily.

The protein localises to the cytoplasm. The enzyme catalyses tRNA(Glu) + L-glutamate + ATP = L-glutamyl-tRNA(Glu) + AMP + diphosphate. Catalyzes the attachment of glutamate to tRNA(Glu) in a two-step reaction: glutamate is first activated by ATP to form Glu-AMP and then transferred to the acceptor end of tRNA(Glu). The protein is Glutamate--tRNA ligase of Halobacterium salinarum (strain ATCC 29341 / DSM 671 / R1).